The primary structure comprises 295 residues: Dehydrodolichyl diphosphate synthase 6 (295 aa).

This sequence belongs to the UPP synthase family. It depends on Mg(2+) as a cofactor.

Its pathway is protein modification; protein glycosylation. Functionally, catalyzes cis-prenyl chain elongation to produce the polyprenyl backbone of dolichol, a glycosyl carrier-lipid required for the biosynthesis of several classes of glycoprotein. This is Dehydrodolichyl diphosphate synthase 6 from Arabidopsis thaliana (Mouse-ear cress).